Consider the following 245-residue polypeptide: MAVRASFENNCEIGCFAKLTNTYCLVAIGGSENFYSVFEGELSDTIPVVHASIAGCRIIGRMCVGNRHGLLVPNNTTDQELQHIRNSLPDTVQIRRVEERLSALGNVTTCNDYVALVHPDLDRETEEILADVLKVEVFRQTVADQVLVGSYCVFSNQGGLVHPKTSIEDQDELSSLLQVPLVAGTVNRGSEVIAAGMVVNDWCAFCGLDTTSTELSVVESVFKLNEAQPSTIATSMRDSLIDSLT.

The residue at position 113 (Tyr-113) is a Phosphotyrosine. Thr-165 carries the post-translational modification Phosphothreonine. Ser-166 is subject to Phosphoserine. 2 positions are modified to phosphoserine; by CK1: Ser-174 and Ser-175. Phosphoserine; by PKC is present on Ser-235. Phosphoserine is present on residues Ser-239 and Ser-243.

The protein belongs to the eIF-6 family. As to quaternary structure, monomer. Associates with the 60S ribosomal subunit. Interacts with RACK1. Interacts with DICER1, AGO2, TARBP2, MOV10 and RPL7A; they form a large RNA-induced silencing complex (RISC). Phosphorylation at Ser-174 and Ser-175 by CSNK1D/CK1 promotes nuclear export. Post-translationally, ufmylated by UFL1. Expressed at very high levels in colon carcinoma with lower levels in normal colon and ileum and lowest levels in kidney and muscle (at protein level).

Its subcellular location is the cytoplasm. The protein resides in the nucleus. It localises to the nucleolus. In terms of biological role, binds to the 60S ribosomal subunit and prevents its association with the 40S ribosomal subunit to form the 80S initiation complex in the cytoplasm. Behaves as a stimulatory translation initiation factor downstream insulin/growth factors. Is also involved in ribosome biogenesis. Associates with pre-60S subunits in the nucleus and is involved in its nuclear export. Cytoplasmic release of TIF6 from 60S subunits and nuclear relocalization is promoted by a RACK1 (RACK1)-dependent protein kinase C activity. In tissues responsive to insulin, controls fatty acid synthesis and glycolysis by exerting translational control of adipogenic transcription factors such as CEBPB, CEBPD and ATF4 that have G/C rich or uORF in their 5'UTR. Required for ROS-dependent megakaryocyte maturation and platelets formation, controls the expression of mitochondrial respiratory chain genes involved in reactive oxygen species (ROS) synthesis. Involved in miRNA-mediated gene silencing by the RNA-induced silencing complex (RISC). Required for both miRNA-mediated translational repression and miRNA-mediated cleavage of complementary mRNAs by RISC. Modulates cell cycle progression and global translation of pre-B cells, its activation seems to be rate-limiting in tumorigenesis and tumor growth. In Homo sapiens (Human), this protein is Eukaryotic translation initiation factor 6.